Here is a 213-residue protein sequence, read N- to C-terminus: 3,4-dihydroxy-2-butanone 4-phosphate synthase (213 aa).

D-ribulose 5-phosphate is bound by residues 37 to 38 (RE), aspartate 42, 150 to 154 (RAGHT), and glutamate 174. Position 38 (glutamate 38) interacts with Mg(2+). Residue histidine 153 coordinates Mg(2+).

It belongs to the DHBP synthase family. As to quaternary structure, homodimer. The cofactor is Mg(2+). It depends on Mn(2+) as a cofactor.

The enzyme catalyses D-ribulose 5-phosphate = (2S)-2-hydroxy-3-oxobutyl phosphate + formate + H(+). Its pathway is cofactor biosynthesis; riboflavin biosynthesis; 2-hydroxy-3-oxobutyl phosphate from D-ribulose 5-phosphate: step 1/1. Its function is as follows. Catalyzes the conversion of D-ribulose 5-phosphate to formate and 3,4-dihydroxy-2-butanone 4-phosphate. The chain is 3,4-dihydroxy-2-butanone 4-phosphate synthase from Buchnera aphidicola subsp. Schizaphis graminum (strain Sg).